Here is a 103-residue protein sequence, read N- to C-terminus: Large ribosomal subunit protein bL21 (103 aa).

It belongs to the bacterial ribosomal protein bL21 family. In terms of assembly, part of the 50S ribosomal subunit. Contacts protein L20.

Functionally, this protein binds to 23S rRNA in the presence of protein L20. In Desulforapulum autotrophicum (strain ATCC 43914 / DSM 3382 / VKM B-1955 / HRM2) (Desulfobacterium autotrophicum), this protein is Large ribosomal subunit protein bL21.